A 276-amino-acid chain; its full sequence is Large ribosomal subunit protein uL2 (276 aa).

The interval 224–276 is disordered; sequence VMNPVDHPHGGGEGKAPIGRKSPMTPWGKPTLGYKTRKKKNKSDKFIIRRRKK. A compositionally biased stretch (basic residues) spans 258-276; it reads KTRKKKNKSDKFIIRRRKK.

The protein belongs to the universal ribosomal protein uL2 family. In terms of assembly, part of the 50S ribosomal subunit. Forms a bridge to the 30S subunit in the 70S ribosome.

Its function is as follows. One of the primary rRNA binding proteins. Required for association of the 30S and 50S subunits to form the 70S ribosome, for tRNA binding and peptide bond formation. It has been suggested to have peptidyltransferase activity; this is somewhat controversial. Makes several contacts with the 16S rRNA in the 70S ribosome. This chain is Large ribosomal subunit protein uL2, found in Geobacillus kaustophilus (strain HTA426).